The following is a 46-amino-acid chain: Light-harvesting protein B-800/850 beta 1 chain (46 aa).

At 2-19 (AERSLSGLTEEEAIAVHD) the chain is on the cytoplasmic side. A bacteriochlorophyll is bound by residues histidine 18 and histidine 36. A helical transmembrane segment spans residues 20-42 (QFKTTFSAFIILAAVAHVLVWVW). At 43 to 46 (KPWF) the chain is on the periplasmic side.

It belongs to the antenna complex beta subunit family. In terms of assembly, the core complex is formed by different alpha and beta chains, binding bacteriochlorophyll molecules, and arranged most probably in tetrameric structures disposed around the reaction center.

The protein localises to the cell inner membrane. Its function is as follows. Antenna complexes are light-harvesting systems, which transfer the excitation energy to the reaction centers. This chain is Light-harvesting protein B-800/850 beta 1 chain (B1), found in Magnetospirillum molischianum (Rhodospirillum molischianum).